The sequence spans 951 residues: Coiled-coil and C2 domain-containing protein 1A (951 aa).

Disordered regions lie at residues 80 to 139 (CMRD…LETT), 185 to 266 (AIDE…RQRD), 306 to 346 (VDLS…PPPR), and 437 to 491 (NQDE…TRAQ). The segment covering 84-104 (PDEDEEEGTDEDDLEADDDLL) has biased composition (acidic residues). 3 positions are modified to phosphothreonine: threonine 92, threonine 204, and threonine 206. Low complexity predominate over residues 201–210 (PASTPTYSPA). Position 208 is a phosphoserine; by CDK1 (serine 208). A phosphoserine mark is found at serine 253 and serine 324. The span at 311–333 (LPPPPDQLPPDPPSPPSQPPTPA) shows a compositional bias: pro residues. Residues 346 to 392 (RTLLEALEQRMERYQVAAAQAKSKGDQRKARMHERIVKQYQDAIRAH) adopt a coiled-coil conformation. A Phosphoserine modification is found at serine 455. Low complexity predominate over residues 475–488 (SAPTAKAPPKATST). Residues 484–517 (KATSTRAQQQLAFLEGRKKQLLQAALRAKQKNDV) are a coiled coil. The C2 domain maps to 637–771 (RFEQRTFSVI…EIACEVREIL (135 aa)). Residues 818–841 (TQVAGPKGKAPPVPAPARESGNRS) form a disordered region.

Belongs to the CC2D1 family. Post-translationally, phosphorylation on Ser-208 by CDK1 promotes spindle pole localization and association with SCC1/RAD21.

It is found in the cytoplasm. Its subcellular location is the nucleus. The protein localises to the cytoskeleton. It localises to the microtubule organizing center. The protein resides in the centrosome. Transcription factor that binds specifically to the DRE (dual repressor element) and represses HTR1A gene transcription in neuronal cells. The combination of calcium and ATP specifically inactivates the binding with FRE. May play a role in the altered regulation of HTR1A associated with anxiety and major depression. Mediates HDAC-independent repression of HTR1A promoter in neuronal cell. Performs essential function in controlling functional maturation of synapses. Plays distinct roles depending on its localization. When cytoplasmic, acts as a scaffold protein in the PI3K/PDK1/AKT pathway. Repressor of HTR1A when nuclear. In the centrosome, regulates spindle pole localization of the cohesin subunit SCC1/RAD21, thereby mediating centriole cohesion during mitosis. In Homo sapiens (Human), this protein is Coiled-coil and C2 domain-containing protein 1A (CC2D1A).